Consider the following 518-residue polypeptide: Adenine deaminase (518 aa).

This sequence belongs to the metallo-dependent hydrolases superfamily. Adenine deaminase family. Requires Mn(2+) as cofactor.

The enzyme catalyses adenine + H2O + H(+) = hypoxanthine + NH4(+). The sequence is that of Adenine deaminase from Methanoculleus marisnigri (strain ATCC 35101 / DSM 1498 / JR1).